We begin with the raw amino-acid sequence, 168 residues long: ATP synthase subunit d, mitochondrial (168 aa).

It belongs to the ATPase d subunit family. As to quaternary structure, F-type ATPases have 2 components, CF(1) - the catalytic core - and CF(0) - the membrane proton channel. CF(0) seems to have nine subunits: a, b, c, d, e, f, g, F6 and 8 (or A6L).

The protein resides in the mitochondrion. It localises to the mitochondrion inner membrane. Mitochondrial membrane ATP synthase (F(1)F(0) ATP synthase or Complex V) produces ATP from ADP in the presence of a proton gradient across the membrane which is generated by electron transport complexes of the respiratory chain. F-type ATPases consist of two structural domains, F(1) - containing the extramembraneous catalytic core, and F(0) - containing the membrane proton channel, linked together by a central stalk and a peripheral stalk. During catalysis, ATP synthesis in the catalytic domain of F(1) is coupled via a rotary mechanism of the central stalk subunits to proton translocation. Part of the complex F(0) domain and the peripheric stalk, which acts as a stator to hold the catalytic alpha(3)beta(3) subcomplex and subunit a/ATP6 static relative to the rotary elements. The polypeptide is ATP synthase subunit d, mitochondrial (Arabidopsis thaliana (Mouse-ear cress)).